Consider the following 1218-residue polypeptide: Sodium bicarbonate cotransporter 3 (1218 aa).

2 disordered regions span residues 1 to 31 (MEAD…KTSS) and 53 to 99 (HVPF…SQRV). Topologically, residues 1 to 612 (MEADGAGEQM…DFKDALSLQC (612 aa)) are extracellular. 4 positions are modified to phosphoserine: Ser-57, Ser-60, Ser-89, and Ser-155. A compositionally biased stretch (basic residues) spans 60–77 (SRRRHRHRGHKHHHRRRK). Residues 78 to 90 (DKDSDKEDGRESP) show a composition bias toward basic and acidic residues. Asn-176 carries an N-linked (GlcNAc...) asparagine glycan. Phosphoserine is present on residues Ser-238, Ser-247, and Arg-263. N-linked (GlcNAc...) asparagine glycosylation occurs at Asn-274. Disordered stretches follow at residues 294 to 350 (SRAG…DIPR), 364 to 412 (KGQE…ENST), and 536 to 577 (SIRI…HAGP). Positions 308 to 318 (VPTPQNSPPSS) are enriched in pro residues. Residues 319 to 337 (PSLSRLTSRSSQQTQPQAP) show a composition bias toward low complexity. Residues 383 to 396 (SPQSAPGNLDSSKS) show a composition bias toward polar residues. 3 positions are modified to phosphoserine: Ser-386, Ser-404, and Ser-407. Asn-410 is a glycosylation site (N-linked (GlcNAc...) asparagine). Phosphoserine occurs at positions 411 and 560. Residues 567 to 576 (PPKEADHHAG) show a composition bias toward basic and acidic residues. Residues 613 to 633 (LASILFLYCACMSPVITFGGL) traverse the membrane as a helical segment. Residues 634 to 641 (LGEATEGR) are Cytoplasmic-facing. The chain crosses the membrane as a helical span at residues 642–662 (ISAIESLFGASLTGIAYSLFA). The Extracellular portion of the chain corresponds to 663–699 (GQPLTILGSTGPVLVFEKILFKFCRDYHLSYLSLRTS). The chain crosses the membrane as a helical span at residues 700-720 (IGLWTSFLCIVLVATDASSLV). Residues 721–729 (CYITRFTEE) lie on the Cytoplasmic side of the membrane. A helical membrane pass occupies residues 730 to 750 (AFAALICIIFIYEALEKLFHL). Topologically, residues 751–821 (GEIYAFNMHN…MFVGSACGPH (71 aa)) are extracellular. A disulfide bridge connects residues Cys-770 and Cys-772. N-linked (GlcNAc...) asparagine glycosylation is found at Asn-780, Asn-790, and Asn-800. Cys-806 and Cys-818 are joined by a disulfide. The helical transmembrane segment at 822-842 (GPYVPDVLFWCVVLFFTTFFL) threads the bilayer. The Cytoplasmic portion of the chain corresponds to 843 to 865 (SSFLKQFKTKRYFPTKVRSTISD). Residues 866-886 (FAVFLTIVIMVAIDYLVGIPS) traverse the membrane as a helical segment. Residues 887 to 912 (PKLHVPEKFEPTDPSRGWIISPLGDN) are Extracellular-facing. A helical transmembrane segment spans residues 913 to 933 (PWWTLLIAAVPALLCTILIFM). Residues 934-958 (DQQITAVIINRKEHKLKKGAGYHLD) are Cytoplasmic-facing. The chain crosses the membrane as a helical span at residues 959-979 (LLMVAVMLGVCSIMGLPWFVA). Residues 980 to 1015 (ATVLSISHVNSLKVESECSAPGEQPKFLGIREQRVT) lie on the Extracellular side of the membrane. The segment at 1012 to 1135 (QRVTGLMIFI…MDLCFTKREL (124 aa)) is essential for cell membrane localization and transport activity. Residues 1016–1036 (GLMIFILMGLSVFMTSVLKFI) form a helical membrane-spanning segment. Residues 1037 to 1038 (PM) lie on the Cytoplasmic side of the membrane. A helical membrane pass occupies residues 1039-1059 (PVLYGVFLYMGVSSLKGIQFF). At 1060-1096 (DRIKLFGMPAKHQPDLIYLRYVPLWKVHVFTVVQLTC) the chain is on the extracellular side. Met-1067 and Leu-1078 each carry phosphoserine. Residues 1097 to 1117 (LVLLWVIKASAAAVVFPMMVL) form a helical membrane-spanning segment. Residues 1118–1140 (ALVFVRKLMDLCFTKRELSWLDD) are essential for interaction with RACK1. Over 1118–1218 (ALVFVRKLMD…KKYMDAETSL (101 aa)) the chain is Cytoplasmic. The tract at residues 1138–1140 (LDD) is CA2-binding. Basic and acidic residues predominate over residues 1148–1165 (KKEDDKKKKEKEEAERML). Residues 1148 to 1172 (KKEDDKKKKEKEEAERMLQGDGDTV) form a disordered region. Thr-1171 is subject to Phosphothreonine. 4 positions are modified to phosphoserine: Ser-1180, Thr-1188, Ile-1201, and Ser-1217. Residues 1215–1218 (ETSL) carry the PDZ-binding motif.

It belongs to the anion exchanger (TC 2.A.31) family. Interacts with USH1C. Forms a complex with ATP6V1B1 and NHERF1/EBP50. Interacts in a pH dependent-manner with CA2/carbonic anhydrase 2. Interacts with CFTR probably through NHERF1/EBP50. In terms of assembly, interacts with RACK1. Post-translationally, undergoes lysosome-mediated degradation. N-glycosylated. In terms of tissue distribution, expressed in aorta, ventricles, atrium, mesenteric artery, kidney, spleen, duodenum, jejunum, ileum, colon, lung, trachea, gastric fundus and pylorus, cerebrum, cerebellum, pancreas, liver, parotid gland, and epididymis. Expressed in the inner ear by cochlear outer and inner hair cells (at protein level). Highly expressed in testis and spleen. As to expression, specifically expressed in kidney. Specifically expressed in hippocampal neurons.

Its subcellular location is the basolateral cell membrane. The protein resides in the apical cell membrane. The protein localises to the cell projection. It is found in the stereocilium. It localises to the cell membrane. The enzyme catalyses hydrogencarbonate(in) + Na(+)(in) = hydrogencarbonate(out) + Na(+)(out). Its activity is regulated as follows. Insensitive to stilbene derivatives. Electroneutral sodium- and bicarbonate-dependent cotransporter with a Na(+):HCO3(-) 1:1 stoichiometry. Mediates the sodium-dependent bicarbonate transport important for pH recovery after acid load as well as for regulation of steady-state pH in the duodenum and vascular smooth muscle cells. Plays a key role in macrophage acidification, mediating bicarbonate import into the cytoplasm which is crucial for net acid extrusion and maintenance of cytoplasmic pH during phagocytosis. Provides cellular bicarbonate for de novo purine and pyrimidine synthesis and is a key mediator of de novo nucleotide synthesis downstream of mTORC1 signaling in proliferating cells. In Rattus norvegicus (Rat), this protein is Sodium bicarbonate cotransporter 3 (Slc4a7).